Here is a 147-residue protein sequence, read N- to C-terminus: Hemoglobin subunit beta-1 (147 aa).

Val-2 carries the post-translational modification N-acetylvaline. Residues 3–147 (HLTDAEKAAV…VATALAHKYH (145 aa)) form the Globin domain. Position 18 is an N6-succinyllysine (Lys-18). Ser-21, Ser-45, and Ser-51 each carry phosphoserine. The residue at position 60 (Lys-60) is an N6-succinyllysine. Residues His-64 and His-93 each coordinate heme b. Arg-105 carries the asymmetric dimethylarginine modification. At Thr-124 the chain carries Phosphothreonine.

The protein belongs to the globin family. In terms of assembly, heterotetramer of two alpha chains and two beta chains. Red blood cells.

Involved in oxygen transport from the lung to the various peripheral tissues. This is Hemoglobin subunit beta-1 (Hbb-b1) from Mus musculus (Mouse).